The primary structure comprises 277 residues: Urease accessory protein UreD (277 aa).

The interval 1–20 (MRQTAQEDASPAPMQRAHGT) is disordered.

This sequence belongs to the UreD family. UreD, UreF and UreG form a complex that acts as a GTP-hydrolysis-dependent molecular chaperone, activating the urease apoprotein by helping to assemble the nickel containing metallocenter of UreC. The UreE protein probably delivers the nickel.

It is found in the cytoplasm. Functionally, required for maturation of urease via the functional incorporation of the urease nickel metallocenter. This chain is Urease accessory protein UreD, found in Chelativorans sp. (strain BNC1).